Reading from the N-terminus, the 92-residue chain is Small ribosomal subunit protein uS19c (92 aa).

It belongs to the universal ribosomal protein uS19 family.

It localises to the plastid. Its subcellular location is the chloroplast. In terms of biological role, protein S19 forms a complex with S13 that binds strongly to the 16S ribosomal RNA. The protein is Small ribosomal subunit protein uS19c of Nephroselmis olivacea (Green alga).